Consider the following 118-residue polypeptide: Hydrogenase maturation factor HypA (118 aa).

Position 2 (H2) interacts with Ni(2+). 4 residues coordinate Zn(2+): C73, C76, C93, and C96.

It belongs to the HypA/HybF family.

Involved in the maturation of [NiFe] hydrogenases. Required for nickel insertion into the metal center of the hydrogenase. In Lawsonia intracellularis (strain PHE/MN1-00), this protein is Hydrogenase maturation factor HypA.